Reading from the N-terminus, the 173-residue chain is Ribosome maturation factor RimM (173 aa).

The PRC barrel domain maps to 98–170 (EDEYYWCDLL…RMTVSLPEGL (73 aa)).

Belongs to the RimM family. Binds ribosomal protein uS19.

It localises to the cytoplasm. Its function is as follows. An accessory protein needed during the final step in the assembly of 30S ribosomal subunit, possibly for assembly of the head region. Essential for efficient processing of 16S rRNA. May be needed both before and after RbfA during the maturation of 16S rRNA. It has affinity for free ribosomal 30S subunits but not for 70S ribosomes. This chain is Ribosome maturation factor RimM, found in Geotalea uraniireducens (strain Rf4) (Geobacter uraniireducens).